A 79-amino-acid polypeptide reads, in one-letter code: MASRKNQLAIDNDELMRRVEALINASKNRYRITVQVANRAKRRRYEDPDDIEDGWMKPIRRAVIEMSDELTEPEIIGDE.

Belongs to the RNA polymerase subunit omega family. As to quaternary structure, in cyanobacteria the RNAP catalytic core is composed of 2 alpha, 1 beta, 1 beta', 1 gamma and 1 omega subunit. When a sigma factor is associated with the core the holoenzyme is formed, which can initiate transcription.

It carries out the reaction RNA(n) + a ribonucleoside 5'-triphosphate = RNA(n+1) + diphosphate. In terms of biological role, promotes RNA polymerase assembly. Latches the N- and C-terminal regions of the beta' subunit thereby facilitating its interaction with the beta and alpha subunits. The sequence is that of DNA-directed RNA polymerase subunit omega from Synechococcus sp. (strain JA-2-3B'a(2-13)) (Cyanobacteria bacterium Yellowstone B-Prime).